The primary structure comprises 122 residues: ATP-dependent Clp protease adapter protein ClpS (122 aa).

This sequence belongs to the ClpS family. Binds to the N-terminal domain of the chaperone ClpA.

Involved in the modulation of the specificity of the ClpAP-mediated ATP-dependent protein degradation. The chain is ATP-dependent Clp protease adapter protein ClpS from Pseudomonas fluorescens (strain SBW25).